We begin with the raw amino-acid sequence, 635 residues long: Cytoplasmic polyadenylation element-binding protein 4 (635 aa).

Disordered regions lie at residues 1-70 (MQDD…TLRL), 149-284 (GFGG…GFNT), and 337-369 (LFPM…PHQN). Over residues 14-30 (PQLQQESQEGQDKQTLS) the composition is skewed to polar residues. Basic residues predominate over residues 166–182 (PSPHPHFQHPHNQHRRS). Residues 216–231 (GSYQSPSSTPSSTSWS) show a composition bias toward low complexity. Residues 232–241 (PGGGYGGWGS) show a composition bias toward gly residues. The segment covering 254–283 (PLNSISPLKKSFPNNQTQTQKYPRNNSGFN) has biased composition (polar residues). Residues 341-353 (EDERSYGEDERSD) are compositionally biased toward basic and acidic residues. RRM domains follow at residues 378–469 (RKVF…PWNL) and 486–568 (KTIF…PYVL).

It belongs to the RRM CPEB family.

Its subcellular location is the cytoplasm. It is found in the cell projection. It localises to the dendrite. The protein resides in the dendritic spine. The protein localises to the postsynaptic density. Its subcellular location is the axon. It is found in the growth cone. It localises to the endoplasmic reticulum. The protein resides in the perinuclear region. Functionally, sequence-specific RNA-binding protein that binds to the cytoplasmic polyadenylation element (CPE), an uridine-rich sequence element (consensus sequence 5'-UUUUUAU-3') within the mRNA 3'-UTR. RNA binding results in a clear conformational change analogous to the Venus fly trap mechanism. The protein is Cytoplasmic polyadenylation element-binding protein 4 (cpeb4) of Danio rerio (Zebrafish).